The sequence spans 286 residues: Beta-lactamase Ohio-1 (286 aa).

A signal peptide spans 1-21 (MRYFRLCIISLLATLPLRVHA). The active-site Acyl-ester intermediate is the Ser-66. A disulfide bridge connects residues Cys-73 and Cys-119. Residue Glu-164 is the Proton acceptor of the active site. Residue 230–232 (KTG) coordinates substrate.

The protein belongs to the class-A beta-lactamase family.

It carries out the reaction a beta-lactam + H2O = a substituted beta-amino acid. In Enterobacter cloacae, this protein is Beta-lactamase Ohio-1.